A 96-amino-acid polypeptide reads, in one-letter code: Protein RnfH (96 aa).

Belongs to the UPF0125 (RnfH) family.

The chain is Protein RnfH from Escherichia coli O139:H28 (strain E24377A / ETEC).